Reading from the N-terminus, the 310-residue chain is Methionyl-tRNA formyltransferase (310 aa).

112–115 (SLLP) provides a ligand contact to (6S)-5,6,7,8-tetrahydrofolate.

The protein belongs to the Fmt family.

It carries out the reaction L-methionyl-tRNA(fMet) + (6R)-10-formyltetrahydrofolate = N-formyl-L-methionyl-tRNA(fMet) + (6S)-5,6,7,8-tetrahydrofolate + H(+). Its function is as follows. Attaches a formyl group to the free amino group of methionyl-tRNA(fMet). The formyl group appears to play a dual role in the initiator identity of N-formylmethionyl-tRNA by promoting its recognition by IF2 and preventing the misappropriation of this tRNA by the elongation apparatus. The protein is Methionyl-tRNA formyltransferase of Pelagibacter ubique (strain HTCC1062).